Consider the following 527-residue polypeptide: MLGLNLQQVLSNVPTISSIVSGVGSYQHGSDSSAWASVAASKSCCDALTKSLGKNSVVFPYDAAYSQSMGSYFSLKNSDLHPSCIALPRSAEDVSKAVRTLSLGAHKWEGQCQFGVRGGGHTPFKGAASTDNGIVLDLLHMPSAGISPDYETITVSPSTTWDLVYEVLDAHNRSTLGTKVAGIGVGGASTSCGVSYFSPRYGYICDMVENWEVVLATGDIVNANANENPDLWKALRGGINNFGIVTAVTLKTFGQGPFWGGQTFHSIDTRQEHFKNHEKLASAHPYDPYAHYINTLVWANGGHWFIGNSIQYTKSDPPVAEPEVFKPFLKTERTPIFPGLPEDTLRVDNVTSFSREYAANTLYPQRWQFACISFAPDADFMETFFQMANDAMQQYVKLAGFKLILNYQPAPTVQLERNGAVDSLGPIQTEGNVVFVHWAVSYDESEAQFDDAITKSVQDLFHAANAKAKELGIYRHFIQPTYADSWQSPFDYRSKSTIEELVATSKKYDPLQVFQKQVPGGFKLPQI.

Positions 78-255 (SDLHPSCIAL…TAVTLKTFGQ (178 aa)) constitute an FAD-binding PCMH-type domain.

Belongs to the oxygen-dependent FAD-linked oxidoreductase family.

It functions in the pathway mycotoxin biosynthesis. Functionally, FAD-dependent monooxygenase; part of the gene cluster that mediates the biosynthesis of cercosporin, a light-activated, non-host-selective toxin. The perylenequinone chromophore of cercosporin absorbs light energy to attain an electronically-activated triplet state and produces active oxygen species such as the hydroxyl radical, superoxide, hydrogen peroxide or singlet oxygen upon reaction with oxygen molecules. These reactive oxygen species cause damage to various cellular components including lipids, proteins and nucleic acids. The first step of cercosporin biosynthesis is performed by the polyketide synthase CTB1 which catalyzes the formation of nor-toralactone. The starter unit acyltransferase (SAT) domain of CTB1 initiates polyketide extension by the selective utilization of acetyl-CoA, which is elongated to the heptaketide in the beta-ketoacyl synthase (KS) domain by successive condensations with six malonyl units introduced by the malonyl acyltransferase (MAT) domain. The product template (PT) domain catalyzes C4-C9 and C2-C11 aldol cyclizations and dehydrations to a trihydroxynaphthalene, which is thought to be delivered to the thioesterase (TE) domain for product release. The bifunctional enzyme CTB3 then methylates nor-toralactone to toralactone before conducting an unusual oxidative aromatic ring opening. The O-methyltransferase CTB2 further methylates the nascent OH-6 of the CBT3 product, blocking further oxidation at this site before the reductase CTB6 reduces the 2-oxopropyl ketone at position C7, giving naphthalene. The FAD-dependent monooxygenase CTB5 in concert with the multicopper oxidase CTB12 are responsible for homodimerization of naphthalene with CTB7 installing the dioxepine moiety, finally producing cercosporin. The fasciclin domain-containing protein CTB11 might act with CTB5 and CTB12 whereas the roles of CTB9 and CTB10 have still to be elucidated. This is FAD-dependent monooxygenase CTB5 from Cercospora beticola (Sugarbeet leaf spot fungus).